The sequence spans 356 residues: Protein-glutamate methylesterase/protein-glutamine glutaminase 2 (356 aa).

A Response regulatory domain is found at 7–124; it reads KVLCVDDSAL…RDGLMEYTDT (118 aa). A 4-aspartylphosphate modification is found at aspartate 58. The region spanning 157-349 is the CheB-type methylesterase domain; the sequence is LLSTEKLIIL…QRVMARLATY (193 aa). Residues serine 169, histidine 195, and aspartate 291 contribute to the active site.

The protein belongs to the CheB family. Post-translationally, phosphorylated by CheA. Phosphorylation of the N-terminal regulatory domain activates the methylesterase activity.

It is found in the cytoplasm. The catalysed reaction is [protein]-L-glutamate 5-O-methyl ester + H2O = L-glutamyl-[protein] + methanol + H(+). It carries out the reaction L-glutaminyl-[protein] + H2O = L-glutamyl-[protein] + NH4(+). Involved in chemotaxis. Part of a chemotaxis signal transduction system that modulates chemotaxis in response to various stimuli. Catalyzes the demethylation of specific methylglutamate residues introduced into the chemoreceptors (methyl-accepting chemotaxis proteins or MCP) by CheR. Also mediates the irreversible deamidation of specific glutamine residues to glutamic acid. The chain is Protein-glutamate methylesterase/protein-glutamine glutaminase 2 from Cupriavidus pinatubonensis (strain JMP 134 / LMG 1197) (Cupriavidus necator (strain JMP 134)).